The following is a 299-amino-acid chain: UDP-N-acetylenolpyruvoylglucosamine reductase (299 aa).

An FAD-binding PCMH-type domain is found at 28-193 (KVGGPADILA…LSAKFELQAG (166 aa)). Residue arginine 172 is part of the active site. Residue serine 222 is the Proton donor of the active site. Glutamate 292 is an active-site residue.

It belongs to the MurB family. It depends on FAD as a cofactor.

Its subcellular location is the cytoplasm. It carries out the reaction UDP-N-acetyl-alpha-D-muramate + NADP(+) = UDP-N-acetyl-3-O-(1-carboxyvinyl)-alpha-D-glucosamine + NADPH + H(+). The protein operates within cell wall biogenesis; peptidoglycan biosynthesis. Cell wall formation. This chain is UDP-N-acetylenolpyruvoylglucosamine reductase, found in Lactococcus lactis subsp. cremoris (strain SK11).